Here is a 513-residue protein sequence, read N- to C-terminus: Flavonoid 3'-monooxygenase (513 aa).

Residues 1–21 (MATLFLTILLATVLFLILRIF) form a helical membrane-spanning segment. The Cytoplasmic portion of the chain corresponds to 22-513 (SHRRNRSHNN…APNVYGLGSG (492 aa)). A heme-binding site is contributed by Cys-445.

This sequence belongs to the cytochrome P450 family. It depends on heme as a cofactor. High expression in siliques and to a lower extent in stems, flowers and senescing leaves.

The protein localises to the endoplasmic reticulum membrane. It carries out the reaction a 3'-unsubstituted flavone + reduced [NADPH--hemoprotein reductase] + O2 = a 3'-hydroxyflavone + oxidized [NADPH--hemoprotein reductase] + H2O + H(+). The protein operates within secondary metabolite biosynthesis; flavonoid biosynthesis. Its function is as follows. Catalyzes the 3'-hydroxylation of the flavonoid B-ring to the 3',4'-hydroxylated state. Convert naringenin to eriodictyol and dihydrokaempferol to dihydroquercetin. The chain is Flavonoid 3'-monooxygenase (CYP75B1) from Arabidopsis thaliana (Mouse-ear cress).